Consider the following 314-residue polypeptide: 4-diphosphocytidyl-2-C-methyl-D-erythritol kinase (314 aa).

Residue lysine 11 is part of the active site. Position 95–105 (95–105 (PIGAGLAGGST)) interacts with ATP. The active site involves aspartate 137.

Belongs to the GHMP kinase family. IspE subfamily.

It catalyses the reaction 4-CDP-2-C-methyl-D-erythritol + ATP = 4-CDP-2-C-methyl-D-erythritol 2-phosphate + ADP + H(+). The protein operates within isoprenoid biosynthesis; isopentenyl diphosphate biosynthesis via DXP pathway; isopentenyl diphosphate from 1-deoxy-D-xylulose 5-phosphate: step 3/6. Its function is as follows. Catalyzes the phosphorylation of the position 2 hydroxy group of 4-diphosphocytidyl-2C-methyl-D-erythritol. This is 4-diphosphocytidyl-2-C-methyl-D-erythritol kinase from Synechococcus elongatus (strain ATCC 33912 / PCC 7942 / FACHB-805) (Anacystis nidulans R2).